A 718-amino-acid chain; its full sequence is Catalase-peroxidase (718 aa).

Positions 98 to 219 (WHAAGTYRMG…LAATEMGLIY (122 aa)) form a cross-link, tryptophyl-tyrosyl-methioninium (Trp-Tyr) (with M-245). Residue H99 is the Proton acceptor of the active site. The segment at residues 219–245 (YVNPEGPQASGDPRSAAPFIRATFGNM) is a cross-link (tryptophyl-tyrosyl-methioninium (Tyr-Met) (with W-98)). H260 serves as a coordination point for heme b.

It belongs to the peroxidase family. Peroxidase/catalase subfamily. In terms of assembly, homodimer or homotetramer. It depends on heme b as a cofactor. Post-translationally, formation of the three residue Trp-Tyr-Met cross-link is important for the catalase, but not the peroxidase activity of the enzyme.

It catalyses the reaction H2O2 + AH2 = A + 2 H2O. It carries out the reaction 2 H2O2 = O2 + 2 H2O. Its function is as follows. Bifunctional enzyme with both catalase and broad-spectrum peroxidase activity. The sequence is that of Catalase-peroxidase from Acinetobacter baumannii (strain ATCC 17978 / DSM 105126 / CIP 53.77 / LMG 1025 / NCDC KC755 / 5377).